The sequence spans 759 residues: uncharacterized protein (759 aa).

Low complexity-rich tracts occupy residues 1–36 (MSSN…NETN), 142–211 (QQQN…NQHH), and 221–347 (NHSN…GSSS). Disordered regions lie at residues 1-47 (MSSN…AQTP), 142-380 (QQQN…PSIG), 409-428 (NNNC…GLGY), 463-504 (IING…NFEN), and 654-759 (LVDD…YLNK). The segment covering 348–360 (PFQDQARSPSSSF) has biased composition (polar residues). Low complexity-rich tracts occupy residues 463–495 (IING…GNNN) and 660–747 (HISN…DNNN).

This is an uncharacterized protein from Dictyostelium discoideum (Social amoeba).